The sequence spans 420 residues: Proteinase-activated receptor 1 (420 aa).

The signal sequence occupies residues 1 to 20 (MMELRVLLLLLLLTLLGAMG). The propeptide at 21-42 (SLCLANSDTQAKGAHSNNMTIK) is removed for receptor activation. N-linked (GlcNAc...) asparagine glycosylation is present at N38. The Extracellular portion of the chain corresponds to 43 to 101 (TFRIFDDSESEFEEIPWDELDESGEGSGDQAPVSRSARKPIRRNITKEAEQYLSSQWLT). The disordered stretch occupies residues 61–80 (ELDESGEGSGDQAPVSRSAR). N-linked (GlcNAc...) asparagine glycosylation occurs at N86. A helical transmembrane segment spans residues 102-127 (KFVPSLYTVVFIVGLPLNLLAIIIFL). Topologically, residues 128–136 (FKMKVRKPA) are cytoplasmic. A helical transmembrane segment spans residues 137–156 (VVYMLNLAIADVFFVSVLPF). Residues 157–175 (KIAYHLSGNDWLFGPGMCR) lie on the Extracellular side of the membrane. C174 and C253 are joined by a disulfide. Residues 176 to 197 (IVTAIFYCNMYCSVLLIASISV) form a helical membrane-spanning segment. Residues 198-217 (DRFLAVVYPMHSLSWRTMSR) lie on the Cytoplasmic side of the membrane. The helical transmembrane segment at 218–238 (AYMACSFIWLISIASTIPLLV) threads the bilayer. At 239 to 267 (TEQTQKIPRLDITTCHDVLDLKDLKDFYI) the chain is on the extracellular side. The helical transmembrane segment at 268-287 (YYFSSFCLLFFFVPFIITTI) threads the bilayer. The Cytoplasmic portion of the chain corresponds to 288–310 (CYIGIIRSLSSSSIENSCKKTRA). Residues 311 to 333 (LFLAVVVLCVFIICFGPTNVLFL) form a helical membrane-spanning segment. Over 334–345 (THYLQEANEFLY) the chain is Extracellular. Residues 346-369 (FAYILSACVGSVSCCLDPLIYYYA) traverse the membrane as a helical segment. The Cytoplasmic portion of the chain corresponds to 370–420 (SSQCQRYLYSLLCCRKVSEPGSSTGQLMSTAMKNDNCSTNAKSSIYKKLLA).

The protein belongs to the G-protein coupled receptor 1 family. Proteolytic cleavage generates a new N-terminus that functions as a tethered ligand.

The protein resides in the cell membrane. Functionally, high affinity receptor that binds the activated thrombin, leading to calcium release from intracellular stores. The thrombin-activated receptor signaling pathway is mediated through PTX-insensitive G proteins, activation of phospholipase C resulting in the production of 1D-myo-inositol 1,4,5-trisphosphate (InsP3) which binds to InsP3 receptors causing calcium release from the stores. This chain is Proteinase-activated receptor 1, found in Xenopus laevis (African clawed frog).